The following is a 233-amino-acid chain: Ribonuclease 3 (233 aa).

In terms of domain architecture, RNase III spans 5 to 127; it reads LERLCRKLGY…VIGAVYLDGG (123 aa). Glutamate 40 is a Mg(2+) binding site. The active site involves aspartate 44. Mg(2+) contacts are provided by aspartate 113 and glutamate 116. Glutamate 116 is a catalytic residue. Positions 156–226 constitute a DRBM domain; that stretch reads DPKTRLQEYL…ATRALALLLA (71 aa).

This sequence belongs to the ribonuclease III family. As to quaternary structure, homodimer. Mg(2+) is required as a cofactor.

It is found in the cytoplasm. It catalyses the reaction Endonucleolytic cleavage to 5'-phosphomonoester.. Digests double-stranded RNA. Involved in the processing of primary rRNA transcript to yield the immediate precursors to the large and small rRNAs (23S and 16S). Processes some mRNAs, and tRNAs when they are encoded in the rRNA operon. Processes pre-crRNA and tracrRNA of type II CRISPR loci if present in the organism. This is Ribonuclease 3 from Nitrosococcus oceani (strain ATCC 19707 / BCRC 17464 / JCM 30415 / NCIMB 11848 / C-107).